We begin with the raw amino-acid sequence, 353 residues long: UPF0283 membrane protein YcjF (353 aa).

3 helical membrane passes run 70–90 (MVMG…VQWT), 100–120 (VALG…GSVV), and 213–233 (ESTL…FIAW).

It belongs to the UPF0283 family.

The protein localises to the cell inner membrane. This is UPF0283 membrane protein YcjF from Escherichia coli O7:K1 (strain IAI39 / ExPEC).